We begin with the raw amino-acid sequence, 208 residues long: Small ribosomal subunit protein uS4 (208 aa).

Residues 98-163 (SRLDNVVYRA…LTPFVIARAV (66 aa)) enclose the S4 RNA-binding domain.

Belongs to the universal ribosomal protein uS4 family. Part of the 30S ribosomal subunit. Contacts protein S5. The interaction surface between S4 and S5 is involved in control of translational fidelity.

In terms of biological role, one of the primary rRNA binding proteins, it binds directly to 16S rRNA where it nucleates assembly of the body of the 30S subunit. Its function is as follows. With S5 and S12 plays an important role in translational accuracy. The chain is Small ribosomal subunit protein uS4 from Acidothermus cellulolyticus (strain ATCC 43068 / DSM 8971 / 11B).